We begin with the raw amino-acid sequence, 317 residues long: Ret finger protein-like 1 (317 aa).

The RING-type zinc finger occupies cysteine 40–serine 82. A B30.2/SPRY domain is found at glutamate 107 to valine 301.

In terms of processing, phosphorylated by PKC and CDK1. The antiproliferative effect seems to be positively regulated by PKC phosphorylation and negatively by CDK1 phosphorylation. As to expression, seems to be expressed in prostate and less abundantly in adult brain, fetal liver, and fetal kidney.

The protein localises to the cytoplasm. It localises to the nucleus. Functionally, negatively regulates the G2-M phase transition, possibly by promoting cyclin B1/CCNB1 and CDK1 proteasomal degradation and thereby preventing their accumulation during interphase. This chain is Ret finger protein-like 1 (RFPL1), found in Homo sapiens (Human).